The sequence spans 730 residues: Ribosomal RNA large subunit methyltransferase K/L (730 aa).

A THUMP domain is found at 46 to 157 (TAYRLCLWSR…RGEAILSLDL (112 aa)). The span at 399–408 (AAVEEGEPRR) shows a compositional bias: basic and acidic residues. The tract at residues 399–418 (AAVEEGEPRRQAPVASEPAR) is disordered.

The protein belongs to the methyltransferase superfamily. RlmKL family.

The protein localises to the cytoplasm. The catalysed reaction is guanosine(2445) in 23S rRNA + S-adenosyl-L-methionine = N(2)-methylguanosine(2445) in 23S rRNA + S-adenosyl-L-homocysteine + H(+). It carries out the reaction guanosine(2069) in 23S rRNA + S-adenosyl-L-methionine = N(2)-methylguanosine(2069) in 23S rRNA + S-adenosyl-L-homocysteine + H(+). Its function is as follows. Specifically methylates the guanine in position 2445 (m2G2445) and the guanine in position 2069 (m7G2069) of 23S rRNA. The polypeptide is Ribosomal RNA large subunit methyltransferase K/L (Pseudomonas entomophila (strain L48)).